Here is an 840-residue protein sequence, read N- to C-terminus: Probable alpha-glucuronidase A (840 aa).

Positions 1–19 (MRSVITTLTLVASVGLAVA) are cleaved as a signal peptide. N-linked (GlcNAc...) asparagine glycosylation is found at N222, N310, N465, N527, N576, N682, and N732.

The protein belongs to the glycosyl hydrolase 67 family.

The protein resides in the secreted. It carries out the reaction an alpha-D-glucuronoside + H2O = D-glucuronate + an alcohol. Its function is as follows. Alpha-glucuronidase involved in the hydrolysis of xylan, a major structural heterogeneous polysaccharide found in plant biomass representing the second most abundant polysaccharide in the biosphere, after cellulose. Releases 4-O-methylglucuronic acid from xylan. The sequence is that of Probable alpha-glucuronidase A (aguA) from Aspergillus clavatus (strain ATCC 1007 / CBS 513.65 / DSM 816 / NCTC 3887 / NRRL 1 / QM 1276 / 107).